The primary structure comprises 178 residues: Translation initiation factor IF-3 (178 aa).

Positions 1–20 (MRRPFKTDAPVKDGPRSNRE) are disordered.

Belongs to the IF-3 family. As to quaternary structure, monomer.

Its subcellular location is the cytoplasm. IF-3 binds to the 30S ribosomal subunit and shifts the equilibrium between 70S ribosomes and their 50S and 30S subunits in favor of the free subunits, thus enhancing the availability of 30S subunits on which protein synthesis initiation begins. This Rhizobium leguminosarum bv. trifolii (strain WSM2304) protein is Translation initiation factor IF-3.